Reading from the N-terminus, the 427-residue chain is Probable anaerobic glycerol-3-phosphate dehydrogenase subunit B (427 aa).

The protein belongs to the anaerobic G-3-P dehydrogenase subunit B family. FMN serves as cofactor.

It catalyses the reaction a quinone + sn-glycerol 3-phosphate = dihydroxyacetone phosphate + a quinol. It functions in the pathway polyol metabolism; glycerol degradation via glycerol kinase pathway; glycerone phosphate from sn-glycerol 3-phosphate (anaerobic route): step 1/1. The sequence is that of Probable anaerobic glycerol-3-phosphate dehydrogenase subunit B from Halobacterium salinarum (strain ATCC 29341 / DSM 671 / R1).